Consider the following 793-residue polypeptide: DnaJ homolog subfamily C member 10 (793 aa).

An N-terminal signal peptide occupies residues 1–32 (MGVWLNKDDFIRDLKRISLCLLILYVVVVVGT). Positions 35-100 (NFYSLLGVSK…DLRKKYDKYG (66 aa)) constitute a J domain. The 103-residue stretch at 130-232 (EIITLERREF…ESLVAFAMQH (103 aa)) folds into the Thioredoxin 1 domain. A disulfide bond links cysteine 158 and cysteine 161. 2 trxb regions span residues 235-350 (STVT…LPDF) and 348-463 (PDFE…PQNF). Thioredoxin domains lie at 454 to 553 (HVTT…IEDL), 557 to 665 (SVVS…SWGL), and 671 to 776 (ASID…ALIY). An intrachain disulfide couples cysteine 480 to cysteine 483. The N-linked (GlcNAc...) asparagine glycan is linked to asparagine 530. Cystine bridges form between cysteine 588–cysteine 591 and cysteine 700–cysteine 703. A Prevents secretion from ER motif is present at residues 790–793 (KDEL).

Interacts with HSPA5 (via its J domain). Interacts with EDEM1. As to expression, ubiquitous. Particularly abundant in secretory tissues. Ubiquitous in fetal tissues and tumor tissues. Higher expression in fetal tissues than in adult tissues. Expressed in testis, pancreas, fetal thymus and fetal kidney. High expression in heart, liver, kidney, and testis. Low expression in spleen and skeletal muscle.

It localises to the endoplasmic reticulum lumen. Its function is as follows. Endoplasmic reticulum disulfide reductase involved both in the correct folding of proteins and degradation of misfolded proteins. Required for efficient folding of proteins in the endoplasmic reticulum by catalyzing the removal of non-native disulfide bonds formed during the folding of proteins, such as LDLR. Also involved in endoplasmic reticulum-associated degradation (ERAD) by reducing incorrect disulfide bonds in misfolded glycoproteins recognized by EDEM1. Interaction with HSPA5 is required its activity, not for the disulfide reductase activity, but to facilitate the release of DNAJC10 from its substrate. Promotes apoptotic signaling pathway in response to endoplasmic reticulum stress. The sequence is that of DnaJ homolog subfamily C member 10 (Dnajc10) from Mus musculus (Mouse).